Here is a 673-residue protein sequence, read N- to C-terminus: DNA ligase (673 aa).

Residues 32 to 36, 81 to 82, and E111 each bind NAD(+); these read DHVYD and SL. Residue K113 is the N6-AMP-lysine intermediate of the active site. Residues R134, E171, K286, and K310 each coordinate NAD(+). 4 residues coordinate Zn(2+): C404, C407, C422, and C428. The 79-residue stretch at 595–673 folds into the BRCT domain; the sequence is NIIDEYKNKT…NEFWKKDNNF (79 aa).

The protein belongs to the NAD-dependent DNA ligase family. LigA subfamily. It depends on Mg(2+) as a cofactor. Mn(2+) is required as a cofactor.

It carries out the reaction NAD(+) + (deoxyribonucleotide)n-3'-hydroxyl + 5'-phospho-(deoxyribonucleotide)m = (deoxyribonucleotide)n+m + AMP + beta-nicotinamide D-nucleotide.. Its function is as follows. DNA ligase that catalyzes the formation of phosphodiester linkages between 5'-phosphoryl and 3'-hydroxyl groups in double-stranded DNA using NAD as a coenzyme and as the energy source for the reaction. It is essential for DNA replication and repair of damaged DNA. This is DNA ligase from Ureaplasma urealyticum serovar 10 (strain ATCC 33699 / Western).